The primary structure comprises 316 residues: tRNA pseudouridine synthase B (316 aa).

Asp-47 serves as the catalytic Nucleophile.

Belongs to the pseudouridine synthase TruB family. Type 1 subfamily.

It carries out the reaction uridine(55) in tRNA = pseudouridine(55) in tRNA. Its function is as follows. Responsible for synthesis of pseudouridine from uracil-55 in the psi GC loop of transfer RNAs. This is tRNA pseudouridine synthase B from Photobacterium profundum (strain SS9).